The chain runs to 249 residues: 23S rRNA (guanosine-2'-O-)-methyltransferase RlmB (249 aa).

The S-adenosyl-L-methionine site is built by glycine 200, isoleucine 220, and leucine 229.

It belongs to the class IV-like SAM-binding methyltransferase superfamily. RNA methyltransferase TrmH family. RlmB subfamily.

The protein resides in the cytoplasm. It carries out the reaction guanosine(2251) in 23S rRNA + S-adenosyl-L-methionine = 2'-O-methylguanosine(2251) in 23S rRNA + S-adenosyl-L-homocysteine + H(+). In terms of biological role, specifically methylates the ribose of guanosine 2251 in 23S rRNA. The protein is 23S rRNA (guanosine-2'-O-)-methyltransferase RlmB of Xanthomonas axonopodis pv. citri (strain 306).